We begin with the raw amino-acid sequence, 147 residues long: UPF0306 protein YhbP (147 aa).

Belongs to the UPF0306 family.

This chain is UPF0306 protein YhbP, found in Escherichia coli O1:K1 / APEC.